Here is a 632-residue protein sequence, read N- to C-terminus: MGILNSISTPADLKALNDEDLDALAKEIRTFLVDKVAATGGHLGPNLGVVELTIGLHRVFDSPQDPIIFDTSHQSYVHKILTGRAKDFDSLRQKDGLSGYTCRAESEHDWTESSHASAALSYADGLSKAKQLDGDTTHSVVAVVGDGALTGGMCWEALNNIAAGKDRKVVVVVNDNGRSYSPTIGGFAENLAGLRMQPFYDRFMEKGKTSLKSMGWVGERTFEALHAFKEGVKSTVIPTEMFPELGMKYVGPVDGHNQKAVDNALKYAHDYDGPIIVHMVTEKGRGYAPAEQDLDELMHSTGVIDPLTGAPKSASKPGWTSVFSDELVKIGAQNENVVAITAAMAGPTGLSKFEANFPNRFFDVGIAEQHAVTSAAGLALGGKHPVVAIYSTFLNRAFDQLLMDVGMLNQPVTLVLDRSGVTGSDGASHNGVWDMALTSIVPGVQVAAPRDEDSLRELLNEAISIDDGPTVVRFPKGDLPTPIVAIDTLEDGVDVLAYEDATEDDAPSVLIVAVGERATVALEVASRITQHGVNVTVVDPRWIVPIPQSLVALSDDHDLVITIEDGVIHGGVGSLLSDALNASEVDTPRRQIAVPQKYLDHASRSEVFADYGLDADGIETTVVGWLDSLFGE.

Thiamine diphosphate-binding positions include His-73 and 114 to 116 (SHA). Position 146 (Asp-146) interacts with Mg(2+). Thiamine diphosphate contacts are provided by residues 147 to 148 (GA), Asn-176, Tyr-287, and Glu-368. Asn-176 is a binding site for Mg(2+).

This sequence belongs to the transketolase family. DXPS subfamily. As to quaternary structure, homodimer. Mg(2+) is required as a cofactor. The cofactor is thiamine diphosphate.

The catalysed reaction is D-glyceraldehyde 3-phosphate + pyruvate + H(+) = 1-deoxy-D-xylulose 5-phosphate + CO2. It functions in the pathway metabolic intermediate biosynthesis; 1-deoxy-D-xylulose 5-phosphate biosynthesis; 1-deoxy-D-xylulose 5-phosphate from D-glyceraldehyde 3-phosphate and pyruvate: step 1/1. Functionally, catalyzes the acyloin condensation reaction between C atoms 2 and 3 of pyruvate and glyceraldehyde 3-phosphate to yield 1-deoxy-D-xylulose-5-phosphate (DXP). The protein is 1-deoxy-D-xylulose-5-phosphate synthase of Corynebacterium glutamicum (strain R).